Here is a 375-residue protein sequence, read N- to C-terminus: Probable pectin lyase D (375 aa).

A signal peptide spans 1-19 (MKYAAVLTTVAALASRALG). 2 disulfide bridges follow: cysteine 82–cysteine 101 and cysteine 91–cysteine 225. A glycan (N-linked (GlcNAc...) asparagine) is linked at asparagine 128. Residue arginine 255 is part of the active site. A disulfide bond links cysteine 321 and cysteine 329.

It belongs to the polysaccharide lyase 1 family.

It localises to the secreted. It catalyses the reaction Eliminative cleavage of (1-&gt;4)-alpha-D-galacturonan methyl ester to give oligosaccharides with 4-deoxy-6-O-methyl-alpha-D-galact-4-enuronosyl groups at their non-reducing ends.. Functionally, pectinolytic enzymes consist of four classes of enzymes: pectin lyase, polygalacturonase, pectin methylesterase and rhamnogalacturonase. Among pectinolytic enzymes, pectin lyase is the most important in depolymerization of pectin, since it cleaves internal glycosidic bonds of highly methylated pectins. The polypeptide is Probable pectin lyase D (pelD) (Aspergillus flavus (strain ATCC 200026 / FGSC A1120 / IAM 13836 / NRRL 3357 / JCM 12722 / SRRC 167)).